Reading from the N-terminus, the 185-residue chain is Ribosome-recycling factor (185 aa).

It belongs to the RRF family.

The protein localises to the cytoplasm. Responsible for the release of ribosomes from messenger RNA at the termination of protein biosynthesis. May increase the efficiency of translation by recycling ribosomes from one round of translation to another. This Saccharophagus degradans (strain 2-40 / ATCC 43961 / DSM 17024) protein is Ribosome-recycling factor.